We begin with the raw amino-acid sequence, 415 residues long: MENLVEKLKKAKESTYILSLLNTNEKNEALRAIANNIEKNIDKIIKENEKDIKRGEEKGLSKAILDRILLNEKRLKDIVKSIEDVIKLPDPVGEIVSMQKRPNGILVGQMRVPIGVIAIIYEARPNVTVDATILALKSGNAIVLRGSSDALNSNIILTNIMKEALSNTKIPQDAVQIIESPEHSVVEELLQMTDYIDVAIPRGSAKFIKHVMNISKVPVIETGAGNNHIYVEEDADFEMARKIIINAKVQRPSVCNAIEKLLVHKNIAEEFLPVIVKDLREYNVEIRGCEKTLKIVKDAIPATEEDWYTEYLDYIIAIKVVDSIDEAIAHINKYNTKHSEAIITKDYHKALKFLRMVDAAAVYVNASTRFTDGGEFGLGAEIGISTQKLHARGPMGLKELTTTKYVIFGEGQIRE.

It belongs to the gamma-glutamyl phosphate reductase family.

It localises to the cytoplasm. It carries out the reaction L-glutamate 5-semialdehyde + phosphate + NADP(+) = L-glutamyl 5-phosphate + NADPH + H(+). It participates in amino-acid biosynthesis; L-proline biosynthesis; L-glutamate 5-semialdehyde from L-glutamate: step 2/2. Its function is as follows. Catalyzes the NADPH-dependent reduction of L-glutamate 5-phosphate into L-glutamate 5-semialdehyde and phosphate. The product spontaneously undergoes cyclization to form 1-pyrroline-5-carboxylate. This is Gamma-glutamyl phosphate reductase from Dictyoglomus thermophilum (strain ATCC 35947 / DSM 3960 / H-6-12).